We begin with the raw amino-acid sequence, 616 residues long: Membrane protein insertase YidC (616 aa).

Residues 9–29 traverse the membrane as a helical segment; the sequence is ILAVILSGLVLIAWQYFYNVP. The segment at 37-80 is disordered; that stretch reads QQQAQAELQKTTPQPTASATPGATPQSGGAAQPSTPAAGQQAQP. Polar residues predominate over residues 44-71; that stretch reads LQKTTPQPTASATPGATPQSGGAAQPST. Transmembrane regions (helical) follow at residues 388-408, 462-482, 520-540, and 559-579; these read FFGN…LLFF, LPVV…FVTI, VFGH…TMWF, and WMPL…VIYW.

It belongs to the OXA1/ALB3/YidC family. Type 1 subfamily. Interacts with the Sec translocase complex via SecD. Specifically interacts with transmembrane segments of nascent integral membrane proteins during membrane integration.

The protein localises to the cell inner membrane. Required for the insertion and/or proper folding and/or complex formation of integral membrane proteins into the membrane. Involved in integration of membrane proteins that insert both dependently and independently of the Sec translocase complex, as well as at least some lipoproteins. Aids folding of multispanning membrane proteins. The sequence is that of Membrane protein insertase YidC from Bradyrhizobium diazoefficiens (strain JCM 10833 / BCRC 13528 / IAM 13628 / NBRC 14792 / USDA 110).